We begin with the raw amino-acid sequence, 352 residues long: MVFRIASSPYTHNQRQTSRIMLLVLLAAVPGIAAQLWFFGWGTLVQILLASVSALLAEALVLKLRKQSVAATLKDNSALLTGLLLAVSIPPLAPWWMVVLGTVFAVIIAKQLYGGLGQNPFNPAMIGYVVLLISFPVQMTSWLPPHEIAVNILGFIDAIQVIFSGHTASGGDMNTLRLGIDGISQATPLDTFKTSVRAGHSVEQIMQYPIYSGILAGAGWQWVNLAWLAGGVWLLWQKAIRWHIPLSFLVTLALCATLGWLFSPETLAAPQIHLLSGATMLGAFFILTDPVTASTTNRGRLIFGALAGLLVWLIRSFGGYPDGVAFAVLLANITVPLIDYYTRPRVYGHRKG.

5 helical membrane-spanning segments follow: residues Ile20–Gly40, Gly42–Leu62, Ala78–Ala109, Pro123–Leu143, and Ile148–Ala168. Position 187 is an FMN phosphoryl threonine (Thr187). 5 consecutive transmembrane segments (helical) span residues Ile214–Leu234, Trp242–Phe262, Leu267–Leu287, Leu301–Pro321, and Asp322–Thr342.

Belongs to the NqrB/RnfD family. In terms of assembly, the complex is composed of six subunits: RsxA, RsxB, RsxC, RsxD, RsxE and RsxG. FMN serves as cofactor.

It localises to the cell inner membrane. Part of a membrane-bound complex that couples electron transfer with translocation of ions across the membrane. Required to maintain the reduced state of SoxR. The sequence is that of Ion-translocating oxidoreductase complex subunit D from Shigella dysenteriae serotype 1 (strain Sd197).